A 78-amino-acid chain; its full sequence is Acyl carrier protein (78 aa).

Residues 2–77 (SEIAQKVKSI…QAIAYLEQHV (76 aa)) enclose the Carrier domain. The residue at position 37 (S37) is an O-(pantetheine 4'-phosphoryl)serine.

Belongs to the acyl carrier protein (ACP) family. Post-translationally, 4'-phosphopantetheine is transferred from CoA to a specific serine of apo-ACP by AcpS. This modification is essential for activity because fatty acids are bound in thioester linkage to the sulfhydryl of the prosthetic group.

It localises to the cytoplasm. It participates in lipid metabolism; fatty acid biosynthesis. Carrier of the growing fatty acid chain in fatty acid biosynthesis. The chain is Acyl carrier protein from Cytophaga hutchinsonii (strain ATCC 33406 / DSM 1761 / CIP 103989 / NBRC 15051 / NCIMB 9469 / D465).